Consider the following 177-residue polypeptide: Archaemetzincin (177 aa).

Zn(2+) is bound at residue histidine 129. Catalysis depends on glutamate 130, which acts as the Proton acceptor. Residues histidine 133, histidine 139, cysteine 140, cysteine 145, cysteine 164, and cysteine 167 each contribute to the Zn(2+) site.

This sequence belongs to the peptidase M54 family. Monomer. Zn(2+) serves as cofactor.

Its function is as follows. Probable zinc metalloprotease whose natural substrate is unknown. In Sulfolobus acidocaldarius (strain ATCC 33909 / DSM 639 / JCM 8929 / NBRC 15157 / NCIMB 11770), this protein is Archaemetzincin.